The primary structure comprises 402 residues: Beta-1,4-galactosyltransferase 1 (402 aa).

Residues 1 to 24 (MKFREPLLGGSAAMPGASLQRACR) are Cytoplasmic-facing. Residues 25–44 (LLVAVCALHLGVTLVYYLAG) traverse the membrane as a helical; Signal-anchor for type II membrane protein segment. Residues 45–402 (RDLRRLPQLV…KITVDIGTPS (358 aa)) are Lumenal-facing. A disordered region spans residues 77–130 (LRLRGVAPPPPLQNSSKPRSRAPSNLDAYSHPGPGPGPGSNLTSAPVPSTTTRS). 2 N-linked (GlcNAc...) asparagine glycosylation sites follow: N90 and N117. Over residues 116-130 (SNLTSAPVPSTTTRS) the composition is skewed to polar residues. Residues C134 and C176 are joined by a disulfide bond. UDP-alpha-D-galactose contacts are provided by residues 187–191 (PFRNR), 226–228 (FNR), 253–254 (VD), and W314. A disulfide bond links C247 and C266. A Mn(2+)-binding site is contributed by D254. Residue 316–319 (GEDD) participates in N-acetyl-D-glucosamine binding. Position 347 (H347) interacts with Mn(2+). 347-349 (HSR) serves as a coordination point for UDP-alpha-D-galactose. Residue R359 coordinates N-acetyl-D-glucosamine.

It belongs to the glycosyltransferase 7 family. Homodimer; and heterodimer with alpha-lactalbumin to form lactose synthase. Interacts (via N-terminal cytoplasmic domain) with UBE2Q1 (via N-terminus); the interaction is direct. Requires Mn(2+) as cofactor. The soluble form derives from the membrane forms by proteolytic processing. Detected in milk (at protein level).

Its subcellular location is the golgi apparatus. The protein resides in the golgi stack membrane. The protein localises to the cell membrane. It is found in the cell surface. It localises to the cell projection. Its subcellular location is the filopodium. The protein resides in the secreted. It carries out the reaction D-glucose + UDP-alpha-D-galactose = lactose + UDP + H(+). The catalysed reaction is an N-acetyl-beta-D-glucosaminyl derivative + UDP-alpha-D-galactose = a beta-D-galactosyl-(1-&gt;4)-N-acetyl-beta-D-glucosaminyl derivative + UDP + H(+). The enzyme catalyses N-acetyl-D-glucosamine + UDP-alpha-D-galactose = beta-D-galactosyl-(1-&gt;4)-N-acetyl-D-glucosamine + UDP + H(+). It catalyses the reaction a beta-D-GlcNAc-(1-&gt;3)-beta-D-Gal-(1-&gt;4)-beta-D-Glc-(1&lt;-&gt;1)-Cer(d18:1(4E)) + UDP-alpha-D-galactose = a neolactoside nLc4Cer(d18:1(4E)) + UDP + H(+). It carries out the reaction a beta-D-glucosylceramide + UDP-alpha-D-galactose = a beta-D-galactosyl-(1-&gt;4)-beta-D-glucosyl-(1&lt;-&gt;1)-ceramide + UDP + H(+). The catalysed reaction is a neolactoside IV(3)-beta-GlcNAc-nLc4Cer + UDP-alpha-D-galactose = a neolactoside nLc6Cer + UDP + H(+). It functions in the pathway protein modification; protein glycosylation. In terms of biological role, the Golgi complex form catalyzes the production of lactose in the lactating mammary gland and could also be responsible for the synthesis of complex-type N-linked oligosaccharides in many glycoproteins as well as the carbohydrate moieties of glycolipids. Functionally, the cell surface form functions as a recognition molecule during a variety of cell to cell and cell to matrix interactions, as those occurring during development and egg fertilization, by binding to specific oligosaccharide ligands on opposing cells or in the extracellular matrix. The secreted form is responsible for the synthesis of complex-type to N-linked oligosaccharides in many glycoproteins as well as the carbohydrate moieties of glycolipids. The sequence is that of Beta-1,4-galactosyltransferase 1 (B4GALT1) from Bos taurus (Bovine).